Reading from the N-terminus, the 243-residue chain is UPF0246 protein spyM18_2163 (243 aa).

This sequence belongs to the UPF0246 family.

This is UPF0246 protein spyM18_2163 from Streptococcus pyogenes serotype M18 (strain MGAS8232).